Here is a 374-residue protein sequence, read N- to C-terminus: C-X-C chemokine receptor type 5 (374 aa).

At 1–57 the chain is on the extracellular side; that stretch reads MNSPISLDMGAITYNMDDLYKELAIYSNSTEIPLQDSIFCSTEEGPLLTSFKTIFMP. Asn28 is a glycosylation site (N-linked (GlcNAc...) asparagine). Residues 58-78 form a helical membrane-spanning segment; sequence VAYSLIFLLGMMGNILVLVIL. The Cytoplasmic segment spans residues 79–90; the sequence is ERHRHTRSSTET. Residues 91-111 traverse the membrane as a helical segment; that stretch reads FLFHLAVADLLLVFILPFAVA. At 112 to 126 the chain is on the extracellular side; the sequence is EGSVGWVLGTFLCKT. Cys124 and Cys204 form a disulfide bridge. A helical transmembrane segment spans residues 127-147; sequence VIALHKINFYCSSLLLACIAV. Residues 148–169 are Cytoplasmic-facing; the sequence is DRYLAIVHAVHAYRRRRLLSIH. Residues 170–190 traverse the membrane as a helical segment; that stretch reads ITCSTIWLAGFLFALPELLFA. The Extracellular segment spans residues 191–221; it reads KVVQPHNNESLPQCIFSQENEAETRAWFASR. Asn198 carries an N-linked (GlcNAc...) asparagine glycan. A helical transmembrane segment spans residues 222-242; that stretch reads FLYHTGGFLLPMLVMAWCYVG. The Cytoplasmic portion of the chain corresponds to 243-261; sequence VVHRLLQAQRRPQRQKAVR. Residues 262–282 form a helical membrane-spanning segment; it reads VAILVTSIFLLCWSPYHIVIF. The Extracellular segment spans residues 283-306; sequence LDTLERLKAVNSSCELSGYLSVAI. Residues 307-327 form a helical membrane-spanning segment; the sequence is TLCEFLGLAHCCLNPMLYTFA. Residues 328–374 lie on the Cytoplasmic side of the membrane; the sequence is GVKFRSDLSRLLTKLGCAGPASLCQLFPGWRKSSLSESENATSLTTF.

It belongs to the G-protein coupled receptor 1 family. In terms of tissue distribution, expressed in neuronal and lymphatic tissue.

The protein resides in the cell membrane. Functionally, cytokine receptor that binds to B-lymphocyte chemoattractant (BLC). Involved in B-cell migration into B-cell follicles of spleen and Peyer patches but not into those of mesenteric or peripheral lymph nodes. This is C-X-C chemokine receptor type 5 (Cxcr5) from Rattus norvegicus (Rat).